The following is a 313-amino-acid chain: Homoserine O-succinyltransferase (313 aa).

Cys142 (acyl-thioester intermediate) is an active-site residue. Substrate-binding residues include Lys163 and Ser192. His235 acts as the Proton acceptor in catalysis. Residue Glu237 is part of the active site. Arg249 is a substrate binding site.

It belongs to the MetA family.

Its subcellular location is the cytoplasm. It catalyses the reaction L-homoserine + succinyl-CoA = O-succinyl-L-homoserine + CoA. It functions in the pathway amino-acid biosynthesis; L-methionine biosynthesis via de novo pathway; O-succinyl-L-homoserine from L-homoserine: step 1/1. In terms of biological role, transfers a succinyl group from succinyl-CoA to L-homoserine, forming succinyl-L-homoserine. This chain is Homoserine O-succinyltransferase, found in Shewanella sp. (strain MR-4).